Consider the following 489-residue polypeptide: Rhamnulokinase (489 aa).

13–17 (ASSGR) is an ATP binding site. C68 and C222 are joined by a disulfide. Residues G83 and 236-238 (HDT) each bind substrate. D237 functions as the Proton acceptor in the catalytic mechanism. T259 is a binding site for ATP. Substrate is bound at residue N296. Q304 serves as a coordination point for ATP. A disulfide bridge links C353 with C370. An ATP-binding site is contributed by G402. C413 and C417 are disulfide-bonded.

It belongs to the rhamnulokinase family. As to quaternary structure, monomer. Mg(2+) is required as a cofactor.

It catalyses the reaction L-rhamnulose + ATP = L-rhamnulose 1-phosphate + ADP + H(+). Its pathway is carbohydrate degradation; L-rhamnose degradation; glycerone phosphate from L-rhamnose: step 2/3. Involved in the catabolism of L-rhamnose (6-deoxy-L-mannose). Catalyzes the transfer of the gamma-phosphate group from ATP to the 1-hydroxyl group of L-rhamnulose to yield L-rhamnulose 1-phosphate. The polypeptide is Rhamnulokinase (Escherichia coli O17:K52:H18 (strain UMN026 / ExPEC)).